We begin with the raw amino-acid sequence, 273 residues long: 4-hydroxy-tetrahydrodipicolinate reductase (273 aa).

Residues Gly-12–Met-17 and Glu-38 each bind NAD(+). Residue Arg-39 coordinates NADP(+). NAD(+) contacts are provided by residues Gly-102–Thr-104 and Ala-126–Phe-129. The Proton donor/acceptor role is filled by His-159. Position 160 (His-160) interacts with (S)-2,3,4,5-tetrahydrodipicolinate. The active-site Proton donor is the Lys-163. A (S)-2,3,4,5-tetrahydrodipicolinate-binding site is contributed by Gly-169 to Thr-170.

This sequence belongs to the DapB family. As to quaternary structure, homotetramer.

It localises to the cytoplasm. The enzyme catalyses (S)-2,3,4,5-tetrahydrodipicolinate + NAD(+) + H2O = (2S,4S)-4-hydroxy-2,3,4,5-tetrahydrodipicolinate + NADH + H(+). It carries out the reaction (S)-2,3,4,5-tetrahydrodipicolinate + NADP(+) + H2O = (2S,4S)-4-hydroxy-2,3,4,5-tetrahydrodipicolinate + NADPH + H(+). Its pathway is amino-acid biosynthesis; L-lysine biosynthesis via DAP pathway; (S)-tetrahydrodipicolinate from L-aspartate: step 4/4. Functionally, catalyzes the conversion of 4-hydroxy-tetrahydrodipicolinate (HTPA) to tetrahydrodipicolinate. This chain is 4-hydroxy-tetrahydrodipicolinate reductase, found in Escherichia coli O139:H28 (strain E24377A / ETEC).